Here is a 222-residue protein sequence, read N- to C-terminus: uncharacterized protein (222 aa).

The tract at residues 142 to 222 (ARRGGCVHPP…LPDPPSAGHL (81 aa)) is disordered. Low complexity predominate over residues 160–169 (QSRSISSRRA). Basic residues predominate over residues 182-196 (PRRRPHRHRTRPQTR).

Belongs to the Rv1128c/1148c/1588c/1702c/1945/3466 family.

This is an uncharacterized protein from Mycobacterium tuberculosis (strain ATCC 25618 / H37Rv).